The chain runs to 489 residues: Betaine aldehyde dehydrogenase (489 aa).

K(+)-binding residues include Thr-26 and Asp-93. 150–152 (GAW) is an NAD(+) binding site. Lys-162 functions as the Charge relay system in the catalytic mechanism. 176–179 (KPSE) serves as a coordination point for NAD(+). Val-180 lines the K(+) pocket. 229–232 (GVET) serves as a coordination point for NAD(+). Position 245 (Leu-245) interacts with K(+). Residue Glu-251 is the Proton acceptor of the active site. NAD(+) is bound by residues Gly-253, Cys-285, and Glu-386. Catalysis depends on Cys-285, which acts as the Nucleophile. Cys-285 is modified (cysteine sulfenic acid (-SOH)). Lys-456 and Gly-459 together coordinate K(+). Glu-463 (charge relay system) is an active-site residue.

Belongs to the aldehyde dehydrogenase family. In terms of assembly, dimer of dimers. K(+) is required as a cofactor.

The enzyme catalyses betaine aldehyde + NAD(+) + H2O = glycine betaine + NADH + 2 H(+). It functions in the pathway amine and polyamine biosynthesis; betaine biosynthesis via choline pathway; betaine from betaine aldehyde: step 1/1. Involved in the biosynthesis of the osmoprotectant glycine betaine. Catalyzes the irreversible oxidation of betaine aldehyde to the corresponding acid. This Burkholderia vietnamiensis (strain G4 / LMG 22486) (Burkholderia cepacia (strain R1808)) protein is Betaine aldehyde dehydrogenase.